Reading from the N-terminus, the 86-residue chain is MSFLSFLLGQKKTSAVVAKERLQIILAHERSGRGASPDYLPQLQQELVAVISKYVNINPDDIKVHLERQDTLEVLEVKIEMPQKEA.

It belongs to the MinE family.

Prevents the cell division inhibition by proteins MinC and MinD at internal division sites while permitting inhibition at polar sites. This ensures cell division at the proper site by restricting the formation of a division septum at the midpoint of the long axis of the cell. The protein is Cell division topological specificity factor of Bordetella petrii (strain ATCC BAA-461 / DSM 12804 / CCUG 43448).